The chain runs to 157 residues: Cyclic pyranopterin monophosphate synthase (157 aa).

Substrate contacts are provided by residues 74-76 (MCH) and 112-113 (ME). Asp-127 is a catalytic residue.

This sequence belongs to the MoaC family. Homohexamer; trimer of dimers.

The enzyme catalyses (8S)-3',8-cyclo-7,8-dihydroguanosine 5'-triphosphate = cyclic pyranopterin phosphate + diphosphate. Its pathway is cofactor biosynthesis; molybdopterin biosynthesis. Functionally, catalyzes the conversion of (8S)-3',8-cyclo-7,8-dihydroguanosine 5'-triphosphate to cyclic pyranopterin monophosphate (cPMP). The sequence is that of Cyclic pyranopterin monophosphate synthase from Syntrophomonas wolfei subsp. wolfei (strain DSM 2245B / Goettingen).